Reading from the N-terminus, the 143-residue chain is Crossover junction endodeoxyribonuclease Hjc (143 aa).

Glu12 contacts Mg(2+). Ser32 is a catalytic residue. Positions 42 and 55 each coordinate Mg(2+).

Belongs to the Holliday junction resolvase Hjc family. As to quaternary structure, homodimer. The cofactor is Mg(2+).

The enzyme catalyses Endonucleolytic cleavage at a junction such as a reciprocal single-stranded crossover between two homologous DNA duplexes (Holliday junction).. In terms of biological role, a structure-specific endonuclease that resolves Holliday junction (HJ) intermediates during genetic recombination. Cleaves 4-way DNA junctions introducing paired nicks in opposing strands, leaving a 5'-terminal phosphate and a 3'-terminal hydroxyl group that are subsequently ligated to produce recombinant products. Hjc, Hjm (Hel308) and PINA coordinate HJ migration and cleavage of replication forks in a coordinated way. The polypeptide is Crossover junction endodeoxyribonuclease Hjc (Saccharolobus islandicus (strain REY15A) (Sulfolobus islandicus)).